The chain runs to 341 residues: L-threonine 3-dehydrogenase (341 aa).

C38 contributes to the Zn(2+) binding site. Catalysis depends on charge relay system residues T40 and H43. Zn(2+) is bound by residues H63, E64, C93, C96, C99, and C107. NAD(+) is bound by residues I175, D195, R200, 262–264, and 286–287; these read LGI and IY.

It belongs to the zinc-containing alcohol dehydrogenase family. Homotetramer. It depends on Zn(2+) as a cofactor.

The protein localises to the cytoplasm. It carries out the reaction L-threonine + NAD(+) = (2S)-2-amino-3-oxobutanoate + NADH + H(+). Its pathway is amino-acid degradation; L-threonine degradation via oxydo-reductase pathway; glycine from L-threonine: step 1/2. Its function is as follows. Catalyzes the NAD(+)-dependent oxidation of L-threonine to 2-amino-3-ketobutyrate. The polypeptide is L-threonine 3-dehydrogenase (Yersinia pseudotuberculosis serotype O:1b (strain IP 31758)).